The chain runs to 159 residues: 2-C-methyl-D-erythritol 2,4-cyclodiphosphate synthase (159 aa).

Residues aspartate 10 and histidine 12 each coordinate a divalent metal cation. 4-CDP-2-C-methyl-D-erythritol 2-phosphate-binding positions include 10–12 (DVH) and 36–37 (HS). An a divalent metal cation-binding site is contributed by histidine 44. 4-CDP-2-C-methyl-D-erythritol 2-phosphate contacts are provided by residues 58–60 (DIG), 63–67 (FPDTD), 102–108 (AQAPKMA), 134–137 (TTTE), phenylalanine 141, 141–144 (FTGR), and arginine 144.

The protein belongs to the IspF family. In terms of assembly, homotrimer. A divalent metal cation is required as a cofactor.

It carries out the reaction 4-CDP-2-C-methyl-D-erythritol 2-phosphate = 2-C-methyl-D-erythritol 2,4-cyclic diphosphate + CMP. It functions in the pathway isoprenoid biosynthesis; isopentenyl diphosphate biosynthesis via DXP pathway; isopentenyl diphosphate from 1-deoxy-D-xylulose 5-phosphate: step 4/6. Involved in the biosynthesis of isopentenyl diphosphate (IPP) and dimethylallyl diphosphate (DMAPP), two major building blocks of isoprenoid compounds. Catalyzes the conversion of 4-diphosphocytidyl-2-C-methyl-D-erythritol 2-phosphate (CDP-ME2P) to 2-C-methyl-D-erythritol 2,4-cyclodiphosphate (ME-CPP) with a corresponding release of cytidine 5-monophosphate (CMP). In Shewanella oneidensis (strain ATCC 700550 / JCM 31522 / CIP 106686 / LMG 19005 / NCIMB 14063 / MR-1), this protein is 2-C-methyl-D-erythritol 2,4-cyclodiphosphate synthase.